A 323-amino-acid polypeptide reads, in one-letter code: MGNAIRLLRKCLNSHGVSASSGGVSALSRDLLNFETTSQVPEKLGSYVVSSQKAQANWYRKILEAWKQAKPRPKTPEEASRLVIAALKNHQKADVEGLLSFYGLPSPHNLVEVPTEAPVSLPKGVRFELNTLPVDTKSVADGDTVTVYVSSKDPLVSSSLPKDVSLAAVKRAKAREKKNYTEADALHKTIIASGYRMISFQNEEVLAKKFRIRLSGIDSPESKMPYGKEAHDELLKMVEGKCLKVLVYTEDRYGRCVGDIYCNGKFVQEVMLKKGLAWHYVAYDKRAELAKWENEARQKRVGLWASSNPEKPWEWRKNKRGGN.

Residue Gly2 is the site of N-myristoyl glycine attachment. Cys11 carries the S-palmitoyl cysteine lipid modification. Positions 130-306 (NTLPVDTKSV…RQKRVGLWAS (177 aa)) constitute a TNase-like domain. Position 143 (Asp143) interacts with Ca(2+). Arg213 is an active-site residue. Asp218 is a binding site for Ca(2+). Active-site residues include Glu221 and Arg255.

Belongs to the thermonuclease family. Ca(2+) serves as cofactor.

It localises to the cell membrane. With respect to regulation, inhibited by Zn(2+). Functionally, enzyme that catalyzes the hydrolysis of both DNA and RNA at the 5' position of the phosphodiester bond. Possesses activity toward the single-stranded DNA, double-stranded DNA and RNA. May be involved in genomic DNA degradation during programmed cell death. The sequence is that of Staphylococcal-like nuclease CAN1 (CAN1) from Arabidopsis thaliana (Mouse-ear cress).